A 501-amino-acid chain; its full sequence is Glycerol kinase (501 aa).

T16 contributes to the ADP binding site. ATP contacts are provided by T16, T17, and S18. T16 is a sn-glycerol 3-phosphate binding site. Residue R20 coordinates ADP. Sn-glycerol 3-phosphate contacts are provided by R84, E85, Y135, and D242. Residues R84, E85, Y135, D242, and Q243 each coordinate glycerol. ADP-binding residues include T264 and G307. Residues T264, G307, Q311, and G408 each contribute to the ATP site. An ADP-binding site is contributed by G408.

This sequence belongs to the FGGY kinase family.

The enzyme catalyses glycerol + ATP = sn-glycerol 3-phosphate + ADP + H(+). The protein operates within polyol metabolism; glycerol degradation via glycerol kinase pathway; sn-glycerol 3-phosphate from glycerol: step 1/1. Key enzyme in the regulation of glycerol uptake and metabolism. Catalyzes the phosphorylation of glycerol to yield sn-glycerol 3-phosphate. The polypeptide is Glycerol kinase (Saccharolobus islandicus (strain M.16.27) (Sulfolobus islandicus)).